Here is a 309-residue protein sequence, read N- to C-terminus: Homoserine O-succinyltransferase (309 aa).

Cysteine 142 functions as the Acyl-thioester intermediate in the catalytic mechanism. Positions 163 and 192 each coordinate substrate. Histidine 235 (proton acceptor) is an active-site residue. Glutamate 237 is a catalytic residue. Arginine 249 contacts substrate.

Belongs to the MetA family.

Its subcellular location is the cytoplasm. It carries out the reaction L-homoserine + succinyl-CoA = O-succinyl-L-homoserine + CoA. It participates in amino-acid biosynthesis; L-methionine biosynthesis via de novo pathway; O-succinyl-L-homoserine from L-homoserine: step 1/1. Its function is as follows. Transfers a succinyl group from succinyl-CoA to L-homoserine, forming succinyl-L-homoserine. In Proteus mirabilis (strain HI4320), this protein is Homoserine O-succinyltransferase.